The chain runs to 424 residues: Dihydroorotase (424 aa).

H61 and H63 together coordinate Zn(2+). Residues 63-65 and N95 each bind substrate; that span reads HLR. D153, H180, and H233 together coordinate Zn(2+). N279 contacts substrate. D306 contacts Zn(2+). D306 is an active-site residue. Substrate is bound at residue H310.

The protein belongs to the metallo-dependent hydrolases superfamily. DHOase family. Class I DHOase subfamily. Zn(2+) serves as cofactor.

It carries out the reaction (S)-dihydroorotate + H2O = N-carbamoyl-L-aspartate + H(+). It functions in the pathway pyrimidine metabolism; UMP biosynthesis via de novo pathway; (S)-dihydroorotate from bicarbonate: step 3/3. In terms of biological role, catalyzes the reversible cyclization of carbamoyl aspartate to dihydroorotate. This Geobacter metallireducens (strain ATCC 53774 / DSM 7210 / GS-15) protein is Dihydroorotase.